Reading from the N-terminus, the 314-residue chain is UPF0761 membrane protein VIBHAR_00593 (314 aa).

6 consecutive transmembrane segments (helical) span residues 41–61 (YLAY…LSIL), 104–124 (MTAV…SNID), 143–163 (FSMY…SIAV), 185–205 (FLRW…YFLV), 217–237 (IGAA…AFYI), and 249–269 (ALAA…IVLI).

This sequence belongs to the UPF0761 family.

The protein resides in the cell inner membrane. This is UPF0761 membrane protein VIBHAR_00593 from Vibrio campbellii (strain ATCC BAA-1116).